A 391-amino-acid polypeptide reads, in one-letter code: Homocysteine-responsive endoplasmic reticulum-resident ubiquitin-like domain member 1 protein (391 aa).

Met1 is subject to N-acetylmethionine. At 1 to 263 (MEPEPQPEPV…VEEDDEINRD (263 aa)) the chain is on the cytoplasmic side. The 63-residue stretch at 10 to 72 (VTLLVKSPNQ…LLDHQCLQDL (63 aa)) folds into the Ubiquitin-like domain. The tract at residues 90–126 (NPSKMPETSTKGAESTEQPDNSNQTQHPGDSSSDGLR) is disordered. The span at 95 to 124 (PETSTKGAESTEQPDNSNQTQHPGDSSSDG) shows a compositional bias: polar residues. Residues 115–200 (QHPGDSSSDG…ASGTFVPTPS (86 aa)) are interaction with UBQLN1. Ser135 carries the post-translational modification Phosphoserine. A helical membrane pass occupies residues 264-284 (WLDWTYSAATFSVFLSILYFY). Residues 285-289 (SSLSR) lie on the Lumenal side of the membrane. The chain crosses the membrane as a helical span at residues 290–310 (FLMVMGATVVMYLHHVGWFPF). The Cytoplasmic segment spans residues 311–391 (RQRPVQNFPD…LPEGPPALAN (81 aa)). Residues 317 to 361 (NFPDDGGPRDAANQDPNNNLQGGMDPEMEDPNRLPPDREVLDPEH) form a disordered region. Residues 346 to 361 (DPNRLPPDREVLDPEH) are compositionally biased toward basic and acidic residues.

As to quaternary structure, interacts with PSEN1 and PSEN2. Interacts with UBXN6. Interacts with UBQLN1, UBQLN2 and UBQLN4. Component of the HRD1 complex, which comprises at least SYNV1/HRD1, FAM8A1, HERPUD1/HERP, OS9, SEL1L and UBE2J1. FAM8A1 binding to SYNV1 may promote recruitment of HERPUD1 to the HRD1 complex.

The protein resides in the endoplasmic reticulum membrane. Its function is as follows. Component of the endoplasmic reticulum quality control (ERQC) system also called ER-associated degradation (ERAD) involved in ubiquitin-dependent degradation of misfolded endoplasmic reticulum proteins. Binds to ubiquilins and this interaction is required for efficient degradation of CD3D via the ERAD pathway. The chain is Homocysteine-responsive endoplasmic reticulum-resident ubiquitin-like domain member 1 protein (Herpud1) from Mus musculus (Mouse).